Reading from the N-terminus, the 761-residue chain is Elongation factor G, mitochondrial (761 aa).

The N-terminal 33 residues, 1–33, are a transit peptide targeting the mitochondrion; that stretch reads MTSVLRGVLKTHLPRTLTLPRCARNFQTTTFLR. In terms of domain architecture, tr-type G spans 66 to 347; it reads TRLRNIGISA…SVVDYLPQPN (282 aa). GTP contacts are provided by residues 75 to 82, 146 to 150, and 200 to 203; these read AHIDSGKT, DTPGH, and NKMD.

It belongs to the TRAFAC class translation factor GTPase superfamily. Classic translation factor GTPase family. EF-G/EF-2 subfamily.

It localises to the mitochondrion. It participates in protein biosynthesis; polypeptide chain elongation. In terms of biological role, mitochondrial GTPase that catalyzes the GTP-dependent ribosomal translocation step during translation elongation. During this step, the ribosome changes from the pre-translocational (PRE) to the post-translocational (POST) state as the newly formed A-site-bound peptidyl-tRNA and P-site-bound deacylated tRNA move to the P and E sites, respectively. Catalyzes the coordinated movement of the two tRNA molecules, the mRNA and conformational changes in the ribosome. The protein is Elongation factor G, mitochondrial of Candida dubliniensis (strain CD36 / ATCC MYA-646 / CBS 7987 / NCPF 3949 / NRRL Y-17841) (Yeast).